We begin with the raw amino-acid sequence, 375 residues long: Growth/differentiation factor 8 (375 aa).

A signal peptide spans 1–18 (MQKLQISVYIYLFMLIVA). Residues 19–266 (GPVDLNEKSE…VTDTPKRSRR (248 aa)) constitute a propeptide that is removed on maturation. N-linked (GlcNAc...) asparagine glycans are attached at residues N47 and N71. Intrachain disulfides connect C272/C282, C281/C340, C309/C372, and C313/C374.

The protein belongs to the TGF-beta family. As to quaternary structure, homodimer; disulfide-linked. Interacts with WFIKKN2, leading to inhibit its activity. Interacts with FSTL3. Post-translationally, synthesized as large precursor molecule that undergoes proteolytic cleavage to generate an N-terminal propeptide and a disulfide linked C-terminal dimer, which is the biologically active molecule. The circulating form consists of a latent complex of the C-terminal dimer and other proteins, including its propeptide, which maintain the C-terminal dimer in a latent, inactive state. Ligand activation requires additional cleavage of the prodomain by a tolloid-like metalloproteinase.

It is found in the secreted. Functionally, acts specifically as a negative regulator of skeletal muscle growth. In Taurotragus derbianus (Giant eland), this protein is Growth/differentiation factor 8 (MSTN).